The following is a 614-amino-acid chain: MASRVSDTGNGNENKENEGTVASDHSEARCSYILFEAECSDGGDDEESMEDSLVEDLVDDASVHQGNSLSLFHAQTVEEYEGEIQSLKRKFILSPLHRDVAELSPRLAGVSLEENRGKKARKSLFHDDSGIDSSAVEVSQLSSTPSAPGPDIRLPKPSDIDLEPLFQSRQRCTHMYSKFKAVYGVSFTDITRPFKSDKTTSQHWVVAAYYLAFDSEISAMEVLLRQQCQFLYIDNNDGIILFFLEYNVQKSRTTVYNWFTANFHYNENRMLANPPRTRNMPAALFFYHRFMGTGGIKHGAMPEIIVNQCVVSNQQTDTFELSRMVQWALDNDLQDEHMLALEYALLAESDGNARAFLKQNNQPMIVKNCSIMVRHYKTALVAKMSISQYVNKRCLDHGEADENSWRGIVHFLRYQGQEFLPFMCKMHNFLHHRPKKSTLVLCGPSDTGKSYFANGLNKFLDGHVLSFVSNGSHFWLSPLRGARCCLIDDATLTFWRYADQNMRALLDGYEISIDAKHRNPMQTRAPPLIITTNEDIMRLDEFKYLQTRTMYVYFNKPFPLKGNGQPLYYIDGYTWNSFFRKFWRHLNLKDPEDESDGETPGTIRLYTRADTDTI.

Positions 1-25 are disordered; that stretch reads MASRVSDTGNGNENKENEGTVASDH. A compositionally biased stretch (basic and acidic residues) spans 13-25; that stretch reads ENKENEGTVASDH. The short motif at 88–90 is the Nuclear localization signal element; it reads KRK. A phosphoserine; by host mark is found at Ser-94 and Ser-104. A Nuclear export signal motif is present at residues 103–112; that stretch reads LSPRLAGVSL. The span at 136-146 shows a compositional bias: polar residues; that stretch reads VEVSQLSSTPS. Positions 136–156 are disordered; the sequence is VEVSQLSSTPSAPGPDIRLPK. Residues 154 to 316 are DNA-binding region; sequence LPKPSDIDLE…NQCVVSNQQT (163 aa). The region spanning 403-567 is the SF3 helicase domain; the sequence is NSWRGIVHFL…FPLKGNGQPL (165 aa). 443–450 contacts ATP; it reads GPSDTGKS.

This sequence belongs to the papillomaviridae E1 protein family. Can form hexamers. Interacts with E2 protein; this interaction increases E1 DNA binding specificity. Interacts with host DNA polymerase subunit POLA2. Interacts with host single stranded DNA-binding protein RPA1. Interacts with host TOP1; this interaction stimulates the enzymatic activity of TOP1. Phosphorylated.

Its subcellular location is the host nucleus. It catalyses the reaction Couples ATP hydrolysis with the unwinding of duplex DNA by translocating in the 3'-5' direction.. The enzyme catalyses ATP + H2O = ADP + phosphate + H(+). Functionally, ATP-dependent DNA 3'-5' helicase required for initiation of viral DNA replication. It forms a complex with the viral E2 protein. The E1-E2 complex binds to the replication origin which contains binding sites for both proteins. During the initial step, a dimer of E1 interacts with a dimer of protein E2 leading to a complex that binds the viral origin of replication with high specificity. Then, a second dimer of E1 displaces the E2 dimer in an ATP-dependent manner to form the E1 tetramer. Following this, two E1 monomers are added to each half of the site, which results in the formation of two E1 trimers on the viral ori. Subsequently, two hexamers will be created. The double hexamer acts as a bi-directional helicase machinery and unwinds the viral DNA and then recruits the host DNA polymerase to start replication. The chain is Replication protein E1 from Homo sapiens (Human).